Reading from the N-terminus, the 231-residue chain is Large ribosomal subunit protein uL1 (231 aa).

The protein belongs to the universal ribosomal protein uL1 family. As to quaternary structure, part of the 50S ribosomal subunit.

Functionally, binds directly to 23S rRNA. The L1 stalk is quite mobile in the ribosome, and is involved in E site tRNA release. Protein L1 is also a translational repressor protein, it controls the translation of the L11 operon by binding to its mRNA. The protein is Large ribosomal subunit protein uL1 of Hydrogenovibrio crunogenus (strain DSM 25203 / XCL-2) (Thiomicrospira crunogena).